A 596-amino-acid chain; its full sequence is Merlin (596 aa).

At Ser13 the chain carries Phosphoserine. Residues 22 to 311 (FTVRIVTMDA…GNHDLFMRRR (290 aa)) enclose the FERM domain. Ser518 carries the phosphoserine; by PAK modification. Positions 560-580 (VLHSESSDRGGPSSKHNTIKK) are disordered.

As to quaternary structure, interacts with NHERF1, HGS and AGAP2. Interacts with SGSM3. Interacts (via FERM domain) with MPP1. Interacts with LAYN. Interacts with WWC1. Interacts with the CUL4A-RBX1-DDB1-VprBP/DCAF1 E3 ubiquitin-protein ligase complex. The unphosphorylated form interacts (via FERM domain) with VPRBP/DCAF1. Interacts (via FERM domain) with NOP53; the interaction is direct. Interacts with SCHIP1; the interaction is direct. In terms of processing, phosphorylation of Ser-518 inhibits nuclear localization by disrupting the intramolecular association of the FERM domain with the C-terminal tail. The dephosphorylation of Ser-518 favors the interaction with NOP53. Post-translationally, ubiquitinated by the CUL4A-RBX1-DDB1-DCAF1/VprBP E3 ubiquitin-protein ligase complex for ubiquitination and subsequent proteasome-dependent degradation.

Its subcellular location is the cell membrane. The protein resides in the cell projection. It localises to the cytoplasm. It is found in the cytoskeleton. The protein localises to the nucleus. In terms of biological role, probable regulator of the Hippo/SWH (Sav/Wts/Hpo) signaling pathway, a signaling pathway that plays a pivotal role in tumor suppression by restricting proliferation and promoting apoptosis. Along with WWC1 can synergistically induce the phosphorylation of LATS1 and LATS2 and can probably function in the regulation of the Hippo/SWH (Sav/Wts/Hpo) signaling pathway. May act as a membrane stabilizing protein. May inhibit PI3 kinase by binding to AGAP2 and impairing its stimulating activity. Suppresses cell proliferation and tumorigenesis by inhibiting the CUL4A-RBX1-DDB1-VprBP/DCAF1 E3 ubiquitin-protein ligase complex. Plays a role in lens development and is required for complete fiber cell terminal differentiation, maintenance of cell polarity and separation of the lens vesicle from the corneal epithelium. In Mus musculus (Mouse), this protein is Merlin (Nf2).